The following is a 311-amino-acid chain: MYVSYLLDKDVSMYPSSVRHSGGLNLAPQNFVSPPQYPDYGGYHVAAAAAATANLDSAQSPGPSWPTAYGAPLREDWNGYAPGGAAAANAVAHGLNGGSPAAAMGYSSPAEYHAHHHPHHHPHHPAASPSCASGLLQTLNLGPPGPAATAAAEQLSPSGQRRNLCEWMRKPAQQSLGSQVKTRTKDKYRVVYTDHQRLELEKEFHFSRYITIRRKSELAATLGLSERQVKIWFQNRRAKERKIKKKQQQQQQQQQQQPPQPPPQPSQPQPGALRSVPEPLSPVTSLQGSVPGSVPGVLGPAGGVLNSTVTQ.

At S60 the chain carries Phosphoserine. Residues 111–151 (EYHAHHHPHHHPHHPAASPSCASGLLQTLNLGPPGPAATAA) form a disordered region. Basic residues predominate over residues 114–124 (AHHHPHHHPHH). The tract at residues 185–215 (KDKYRVVYTDHQRLELEKEFHFSRYITIRRK) is interaction with DNA. Residues 185–244 (KDKYRVVYTDHQRLELEKEFHFSRYITIRRKSELAATLGLSERQVKIWFQNRRAKERKIK) constitute a DNA-binding region (homeobox). The tract at residues 227 to 241 (RQVKIWFQNRRAKER) is interaction with 5-mCpG DNA. Residues 239–311 (KERKIKKKQQ…GGVLNSTVTQ (73 aa)) are disordered. The segment covering 248-257 (QQQQQQQQQQ) has biased composition (low complexity). Residues 258–268 (PPQPPPQPSQP) are compositionally biased toward pro residues. Phosphoserine; by CDK2 is present on S281. The short motif at 281 to 293 (SPVTSLQGSVPGS) is the 4S motif; modulates transactivation activity and protein stability element. Residues 285–298 (SLQGSVPGSVPGVL) are compositionally biased toward low complexity.

It belongs to the Caudal homeobox family. Can bind DNA as a monomer or homodimer. In terms of processing, ubiquitinated, leading to its degradation by the proteasome. Phosphorylation at Ser-60 reduces transactivation capacity. Phosphorylation at Ser-281 reduces transactivation capacity and increases ubiquitin-dependent proteasome degradation. In terms of tissue distribution, in the intestine, detected in ileum and proximal and distal colon (at protein level). In adult small intestine, predominantly localized in crypt and lower villus cells of the epithelium (at protein level). Expressed in the intestine but not detected in other tissues including stomach, liver, kidney, spleen, brain, heart, lung, pancreas, skeletal muscle and testis. Expressed specifically in gut epithelium where it is not restricted to a particular cell lineage. Abundant expression is seen in the proximal colon with slightly lower levels in distal colon. Expression in the proximal colon is not restricted either to a particular cell lineage or stage of differentiation while in the distal colon it is more abundant in the differentiated cells towards the top of the crypt.

It is found in the nucleus. Transcription factor which regulates the transcription of multiple genes expressed in the intestinal epithelium. Binds to the promoter of the intestinal sucrase-isomaltase SI and activates SI transcription. Binds to the DNA sequence 5'-ATAAAAACTTAT-3' in the promoter region of VDR and activates VDR transcription. Binds to and activates transcription of LPH. Activates transcription of CLDN2 and intestinal mucin MUC2. Binds to the 5'-AATTTTTTACAACACCT-3' DNA sequence in the promoter region of CA1 and activates CA1 transcription. Important in broad range of functions from early differentiation to maintenance of the intestinal epithelial lining of both the small and large intestine. Binds preferentially to methylated DNA. In Mus musculus (Mouse), this protein is Homeobox protein CDX-2 (Cdx2).